The primary structure comprises 1173 residues: Alpha-mannosidase 2 (1173 aa).

The tract at residues M1 to G21 is disordered. Over M1–N50 the chain is Cytoplasmic. The chain crosses the membrane as a helical; Signal-anchor span at residues F51–T71. Residues L72–K1173 lie on the Lumenal side of the membrane. N-linked (GlcNAc...) asparagine glycosylation is present at N106. Zn(2+) contacts are provided by H162 and D164. An N-linked (GlcNAc...) asparagine glycan is attached at N262. D276 is a Zn(2+) binding site. D276 serves as the catalytic Nucleophile. A glycan (N-linked (GlcNAc...) asparagine) is linked at N467. H564 contacts Zn(2+). 6 N-linked (GlcNAc...) asparagine glycosylation sites follow: N675, N772, N782, N991, N1098, and N1108.

This sequence belongs to the glycosyl hydrolase 38 family. Homodimer; disulfide-linked. Interacts with GALT1. The cofactor is Zn(2+). Post-translationally, glycosylated.

Its subcellular location is the golgi apparatus membrane. The catalysed reaction is N(4)-{beta-D-GlcNAc-(1-&gt;2)-alpha-D-Man-(1-&gt;3)-[alpha-D-Man-(1-&gt;3)-[alpha-D-Man-(1-&gt;6)]-alpha-D-Man-(1-&gt;6)]-beta-D-Man-(1-&gt;4)-beta-D-GlcNAc-(1-&gt;4)-beta-D-GlcNAc}-L-asparaginyl-[protein] + 2 H2O = 2 alpha-D-mannopyranose + an N(4)-{beta-D-GlcNAc-(1-&gt;2)-alpha-D-Man-(1-&gt;3)-[alpha-D-Man-(1-&gt;6)]-beta-D-Man-(1-&gt;4)-beta-D-GlcNAc-(1-&gt;4)-beta-D-GlcNAc}-L-asparaginyl-[protein]. The protein operates within protein modification; protein glycosylation. Inhibited by 1 mM Cu(2+) and by the class II alpha-mannosidase inhibitor swainsonine. Its function is as follows. Catalyzes the first committed step in the biosynthesis of complex N-glycans. It controls conversion of high mannose to complex N-glycans; the final hydrolytic step in the N-glycan maturation pathway. Converts GlcNAcMan(5)GlcNAc(2) (Man5Gn) into GlcNAcMan(3)GlcNAc(2) (MGn) by sequential removal of two alpha1,6- and alpha1,3-linked mannose residues from the alpha1,6-mannose branch of the substrate. To a lesser extent, also able to cleave beta1,2-xylosylated Man5Gn-glycopeptide (Man5GnX-GP) and pyridylaminated substrates Man5Gn-PA and Man5GnX-PA, but not active toward Man5-glycopeptide. Required for resistance to salt stress. This chain is Alpha-mannosidase 2, found in Arabidopsis thaliana (Mouse-ear cress).